Reading from the N-terminus, the 530-residue chain is DNA damage-binding protein cmr1 (530 aa).

2 disordered regions span residues Val34 to Asp115 and Thr224 to Leu250. Basic residues predominate over residues Ala52 to Val62. Over residues Glu89–Ala108 the composition is skewed to basic and acidic residues. The stretch at Leu188–Ala229 is one WD 1 repeat. Positions Asp233 to Asp244 are enriched in acidic residues. WD repeat units follow at residues Pro252–Arg292, Val302–Ala339, Leu344–Pro384, Glu389–Lys430, Gly453–Leu496, and Asp499–Met530.

It belongs to the WD repeat DDB2/WDR76 family.

Its function is as follows. DNA-binding protein that binds to both single- and double-stranded DNA. Binds preferentially to UV-damaged DNA. May be involved in DNA-metabolic processes. The polypeptide is DNA damage-binding protein cmr1 (Aspergillus terreus (strain NIH 2624 / FGSC A1156)).